The primary structure comprises 106 residues: Heat shock protein HspQ (106 aa).

Residues 80-106 (DEHLDNDSMDELSQSIRNQLQAPRLRN) are disordered. A compositionally biased stretch (polar residues) spans 90–100 (ELSQSIRNQLQ).

Belongs to the HspQ family.

It localises to the cytoplasm. Involved in the degradation of certain denaturated proteins, including DnaA, during heat shock stress. The polypeptide is Heat shock protein HspQ (Proteus mirabilis (strain HI4320)).